A 765-amino-acid chain; its full sequence is LPS-assembly protein LptD (765 aa).

Residues 1 to 18 (MQIRYFLALSLLPQLVLA) form the signal peptide.

The protein belongs to the LptD family. Component of the lipopolysaccharide transport and assembly complex. Interacts with LptE and LptA.

Its subcellular location is the cell outer membrane. Its function is as follows. Together with LptE, is involved in the assembly of lipopolysaccharide (LPS) at the surface of the outer membrane. This Shewanella sp. (strain MR-4) protein is LPS-assembly protein LptD.